A 310-amino-acid chain; its full sequence is Lipoyl synthase (310 aa).

[4Fe-4S] cluster is bound by residues C61, C66, C72, C87, C91, C94, and S300. The 217-residue stretch at 73–289 (FNNGTATFMI…EYIALSLGFS (217 aa)) folds into the Radical SAM core domain.

This sequence belongs to the radical SAM superfamily. Lipoyl synthase family. It depends on [4Fe-4S] cluster as a cofactor.

Its subcellular location is the cytoplasm. It catalyses the reaction [[Fe-S] cluster scaffold protein carrying a second [4Fe-4S](2+) cluster] + N(6)-octanoyl-L-lysyl-[protein] + 2 oxidized [2Fe-2S]-[ferredoxin] + 2 S-adenosyl-L-methionine + 4 H(+) = [[Fe-S] cluster scaffold protein] + N(6)-[(R)-dihydrolipoyl]-L-lysyl-[protein] + 4 Fe(3+) + 2 hydrogen sulfide + 2 5'-deoxyadenosine + 2 L-methionine + 2 reduced [2Fe-2S]-[ferredoxin]. It participates in protein modification; protein lipoylation via endogenous pathway; protein N(6)-(lipoyl)lysine from octanoyl-[acyl-carrier-protein]: step 2/2. Catalyzes the radical-mediated insertion of two sulfur atoms into the C-6 and C-8 positions of the octanoyl moiety bound to the lipoyl domains of lipoate-dependent enzymes, thereby converting the octanoylated domains into lipoylated derivatives. In Buchnera aphidicola subsp. Cinara cedri (strain Cc), this protein is Lipoyl synthase.